We begin with the raw amino-acid sequence, 142 residues long: Hemoglobin subunit alpha (142 aa).

The Globin domain occupies 2–142; that stretch reads VLSAADKTNV…LSTVLTSKYR (141 aa). Ser-4 carries the phosphoserine modification. The residue at position 8 (Lys-8) is an N6-succinyllysine. Residue Thr-9 is modified to Phosphothreonine. Lys-12 bears the N6-succinyllysine mark. Lys-17 bears the N6-acetyllysine; alternate mark. An N6-succinyllysine; alternate modification is found at Lys-17. Phosphotyrosine is present on Tyr-25. Residue Ser-36 is modified to Phosphoserine. Residue Lys-41 is modified to N6-succinyllysine. Position 50 is a phosphoserine (Ser-50). Gln-59 provides a ligand contact to O2. His-88 is a heme b binding site. At Thr-109 the chain carries Phosphothreonine. Ser-125 carries the phosphoserine modification. Thr-135 and Thr-138 each carry phosphothreonine. Position 139 is a phosphoserine (Ser-139).

This sequence belongs to the globin family. Heterotetramer of two alpha chains and two beta chains. As to expression, red blood cells.

Its function is as follows. Involved in oxygen transport from the lung to the various peripheral tissues. Functionally, hemopressin acts as an antagonist peptide of the cannabinoid receptor CNR1. Hemopressin-binding efficiently blocks cannabinoid receptor CNR1 and subsequent signaling. The protein is Hemoglobin subunit alpha (HBA) of Monodelphis domestica (Gray short-tailed opossum).